The chain runs to 512 residues: MNSASRITLFFLLTVLITQECLSSKGEDRLFRRLFRRYNQFIRPVENVSDPVTVEFEVSISQLVKVDEVNQIMETNLWLRHIWNDYKLKWLPAEFDGIEFIRVPSNKIWRPDIVLYNNAVGDFLVEDKTKALLKYDGTITWVPPAIFKSSCPMDITYFPFDYQNCSMKFGSWTYDKAKIDLVLIGSKVNLKDFWESGEWEIIDAPGYKHDIKYNCCEEIYPDITYSFYIRRLPLFYTINLIIPCLLISFLTILVFYLPSDCGEKVTLCISVLLSLTVFLLVITETIPSTSLVIPLIGEYLLFTMIFVTLSIVITVFVLNVHYRTPMTHTMPSWVRTVFLRALPRVMLMRRPIDLSESSGKGGGEIAGSSGTGGGRGAEGKKMKSSASQQGAMNSLEFGEGKAALEGKKGGCPCHPIKEAIEGDCGKVSRQLTPQAINTVVTFSVVSPEIKQAIESVKYIAENMRSRNKAKEVEDDWKYVAMVIDRIFLWVFVLVCVLGTLGLFLQPLIGFFS.

A signal peptide spans 1–23; the sequence is MNSASRITLFFLLTVLITQECLS. The Extracellular segment spans residues 24–242; that stretch reads SKGEDRLFRR…PLFYTINLII (219 aa). N-linked (GlcNAc...) asparagine glycosylation is found at Asn47 and Asn164. 2 disulfide bridges follow: Cys151–Cys165 and Cys215–Cys216. A helical membrane pass occupies residues 243-258; sequence PCLLISFLTILVFYLP. At 259 to 260 the chain is on the cytoplasmic side; it reads SD. The chain crosses the membrane as a helical span at residues 261-277; sequence CGEKVTLCISVLLSLTV. Glu263 lines the Na(+) pocket. At 278-299 the chain is on the extracellular side; that stretch reads FLLVITETIPSTSLVIPLIGEY. A helical membrane pass occupies residues 300 to 318; that stretch reads LLFTMIFVTLSIVITVFVL. The Cytoplasmic segment spans residues 319 to 482; it reads NVHYRTPMTH…EDDWKYVAMV (164 aa). Residues 356–389 are disordered; that stretch reads ESSGKGGGEIAGSSGTGGGRGAEGKKMKSSASQQ. Positions 359–376 are enriched in gly residues; that stretch reads GKGGGEIAGSSGTGGGRG. Residues 483-501 traverse the membrane as a helical segment; it reads IDRIFLWVFVLVCVLGTLG. At 502–512 the chain is on the extracellular side; the sequence is LFLQPLIGFFS.

The protein belongs to the ligand-gated ion channel (TC 1.A.9) family. Acetylcholine receptor (TC 1.A.9.1) subfamily. Alpha-3/CHRNA3 sub-subfamily. Neuronal AChR is composed of two different types of subunits: alpha and beta. CHRNA3/Alpha-3 subunit can be combined to CHRNB2/beta-2 or CHRNB4/beta-4 to give rise to functional receptors. Expressed in retina and brain.

Its subcellular location is the synaptic cell membrane. It localises to the cell membrane. It is found in the endoplasmic reticulum. The protein localises to the golgi apparatus. The enzyme catalyses K(+)(in) = K(+)(out). It catalyses the reaction Na(+)(in) = Na(+)(out). The catalysed reaction is Ca(2+)(in) = Ca(2+)(out). With respect to regulation, activated by a myriad of ligands such as acetylcholine, cytisine, nicotine, choline and epibatidine. The heteropentamer CHRNA3:CHRNB2 activity is blocked by alpha-conotoxins ImI, ImII, PnIA, GID and MII. The heteropentamer CHRNA3:CHRNB4 activity is blocked by the alpha-conotoxin ImI and AuIB. Component of neuronal acetylcholine receptors (nAChRs) that function as pentameric, ligand-gated cation channels with high calcium permeability among other activities. nAChRs are excitatory neurotrasnmitter receptors formed by a collection of nAChR subunits known to mediate synaptic transmission in the nervous system and the neuromuscular junction. Each nAchR subunit confers differential attributes to channel properties, including activation, deactivation and desensitization kinetics, pH sensitivity, cation permeability, and binding to allosteric modulators. CHRNA3 forms heteropentameric neuronal acetylcholine receptors with CHRNB2 and CHRNB4. CHRNA3:CHRNB4 being predominant in neurons of the autonomic ganglia, it is known as ganglionic nicotinic receptor. CHRNA3:CHRNB4 also plays an important role in the habenulo-interpeduncular tract, modulating the mesolimbic dopamine system and affecting reward circuits and addiction. Hypothalamic CHRNA3:CHRNB4 nAChR activation by nicotine leads to activation of POMC neurons and a decrease in food intake. Also expressed in the urothelium where it modulates reflex bladder activity by increasing intracellular calcium through extracellular influx and basal ATP release. The protein is Neuronal acetylcholine receptor subunit alpha-3 (chrna3) of Carassius auratus (Goldfish).